The primary structure comprises 111 residues: uncharacterized protein (111 aa).

Residues 18 to 41 (FFYFFFISFYTLWIVFFLLHLSFF) form a helical membrane-spanning segment.

Its subcellular location is the membrane. This is an uncharacterized protein from Saccharomyces cerevisiae (strain ATCC 204508 / S288c) (Baker's yeast).